Consider the following 208-residue polypeptide: N-(5'-phosphoribosyl)anthranilate isomerase (208 aa).

Belongs to the TrpF family.

The enzyme catalyses N-(5-phospho-beta-D-ribosyl)anthranilate = 1-(2-carboxyphenylamino)-1-deoxy-D-ribulose 5-phosphate. It participates in amino-acid biosynthesis; L-tryptophan biosynthesis; L-tryptophan from chorismate: step 3/5. The chain is N-(5'-phosphoribosyl)anthranilate isomerase from Neisseria meningitidis serogroup B (strain ATCC BAA-335 / MC58).